A 641-amino-acid polypeptide reads, in one-letter code: Peroxisomal targeting signal 1 receptor (641 aa).

Cysteine 12 is covalently cross-linked (Glycyl cysteine thioester (Cys-Gly) (interchain with G-Cter in ubiquitin)). The segment at 12-34 (CSEPNALGNFVQHFTNERSYHDK) is amphipathic helix 1 (AH1). The segment at 74-92 (HLMMDRHLNLRDGPREHKE) is amphipathic helix 2 (AH2). The amphipathic helix 4 (AH4) stretch occupies residues 261–288 (VEAAWDETARRTISDITRPITQINDPKL). Residues 331-335 (WTEDY) carry the WxxxF/Y motif motif. TPR repeat units follow at residues 359 to 392 (DSDT…NPEN), 393 to 426 (AMAW…DPTN), 427 to 460 (SKAR…TPEY), 503 to 536 (PEVQ…SPTD), 538 to 570 (QLWN…KPSY), and 571 to 604 (VRAR…HPAP).

This sequence belongs to the peroxisomal targeting signal receptor family. As to quaternary structure, interacts (via WxxxF/Y and LVxEF motifs) with PEX14; promoting translocation through the PEX13-PEX14 docking complex. Interacts with PEX7, promoting peroxisomal import of proteins containing a C-terminal PTS2-type peroxisomal targeting signal. Monoubiquitinated at Cys-12 by PEX2 during PEX5 passage through the retrotranslocation channel. Cys-12 monoubiquitination acts as a recognition signal for the PEX1-PEX6 complex and is required for PEX5 extraction and export from peroxisomes. When PEX5 recycling is compromised, polyubiquitinated by PEX10 during its passage through the retrotranslocation channel, leading to its degradation.

The protein localises to the cytoplasm. Its subcellular location is the cytosol. The protein resides in the peroxisome matrix. In terms of biological role, receptor that mediates peroxisomal import of proteins containing a C-terminal PTS1-type tripeptide peroxisomal targeting signal (SKL-type). Binds to cargo proteins containing a PTS1 peroxisomal targeting signal in the cytosol, and translocates them into the peroxisome matrix by passing through the PEX13-PEX14 docking complex along with cargo proteins. PEX5 receptor is then retrotranslocated into the cytosol, leading to release of bound cargo in the peroxisome matrix, and reset for a subsequent peroxisome import cycle. Functionally, in addition to promoting peroxisomal translocation of proteins containing a PTS1 peroxisomal targeting signal, mediates peroxisomal import of proteins containing a C-terminal PTS2-type peroxisomal targeting signal via its interaction with PEX7. Interaction with PEX7 only takes place when PEX7 is associated with cargo proteins containing a PTS2 peroxisomal targeting signal. PEX7 along with PTS2-containing cargo proteins are then translocated through the PEX13-PEX14 docking complex together with PEX5. This is Peroxisomal targeting signal 1 receptor (pex5) from Dictyostelium discoideum (Social amoeba).